Here is a 647-residue protein sequence, read N- to C-terminus: RAF proto-oncogene serine/threonine-protein kinase (647 aa).

At S43 the chain carries Phosphoserine. The RBD domain occupies 56–131 (NTIRVFLPNK…IGEELQVDFL (76 aa)). The segment at 138-184 (THNFARKTFLKLAFCDICQKFLLNGFRCQTCGYKFHEHCSTKVPTMC) adopts a Phorbol-ester/DAG-type zinc-finger fold. 2 disordered regions span residues 236–269 (HVFT…VSTT) and 284–334 (HSES…RPRG). The segment covering 239-269 (TFNTSNPSSEGTLSQRQRSTSTPNVHMVSTT) has biased composition (polar residues). S259 carries the phosphoserine modification. The residue at position 268 (T268) is a Phosphothreonine; by autocatalysis. Low complexity predominate over residues 286–297 (ESASPSALSGSP). Over residues 298-309 (NNMSPTGWSQPK) the composition is skewed to polar residues. The residue at position 338 (S338) is a Phosphoserine. The Protein kinase domain maps to 349-609 (VMLSTRIGSG…PQILSSIELL (261 aa)). ATP-binding positions include 355–363 (IGSGSFGTV) and K375. D468 serves as the catalytic Proton acceptor. Phosphoserine occurs at positions 499 and 621.

The protein belongs to the protein kinase superfamily. TKL Ser/Thr protein kinase family. RAF subfamily. In terms of processing, phosphorylation at Ser-259 inactivates kinase activity. Dephosphorylation of Ser-259 by a complex containing protein phosphatase 1 relieves inactivation, leading to stimulate RAF1 activity. Isoform 1 was present in all tissues tested: skeletal muscle, intestine, brain, gizzard, heart, lung, kidney, bone marrow, spleen and bursa of Fabricius. Isoform 2 was only detected in brain, heart and skeletal muscle. In brain and heart isoform 1 is more abundant than isoform 2. In skeletal muscle isoform 2 is more abundant than isoform 1.

It localises to the cytoplasm. The protein localises to the cell membrane. It carries out the reaction L-seryl-[protein] + ATP = O-phospho-L-seryl-[protein] + ADP + H(+). It catalyses the reaction L-threonyl-[protein] + ATP = O-phospho-L-threonyl-[protein] + ADP + H(+). In terms of biological role, serine/threonine-protein kinase that acts as a regulatory link between the membrane-associated Ras GTPases and the MAPK/ERK cascade, and this critical regulatory link functions as a switch determining cell fate decisions. RAF1 activation initiates a mitogen-activated protein kinase (MAPK) cascade that comprises a sequential phosphorylation of the dual-specific MAPK kinases (MAP2K1/MEK1 and MAP2K2/MEK2) and the extracellular signal-regulated kinases (MAPK3/ERK1 and MAPK1/ERK2). The chain is RAF proto-oncogene serine/threonine-protein kinase (RAF1) from Gallus gallus (Chicken).